A 345-amino-acid polypeptide reads, in one-letter code: Heat-inducible transcription repressor HrcA (345 aa).

Belongs to the HrcA family.

Functionally, negative regulator of class I heat shock genes (grpE-dnaK-dnaJ and groELS operons). Prevents heat-shock induction of these operons. This chain is Heat-inducible transcription repressor HrcA, found in Dehalococcoides mccartyi (strain ATCC BAA-2100 / JCM 16839 / KCTC 5957 / BAV1).